The chain runs to 140 residues: Ribosome-binding factor A (140 aa).

The tract at residues 121–140 (KAAEHGREDEELDDTEQDDK) is disordered. Positions 129–140 (DEELDDTEQDDK) are enriched in acidic residues.

This sequence belongs to the RbfA family. Monomer. Binds 30S ribosomal subunits, but not 50S ribosomal subunits or 70S ribosomes.

It is found in the cytoplasm. Its function is as follows. One of several proteins that assist in the late maturation steps of the functional core of the 30S ribosomal subunit. Associates with free 30S ribosomal subunits (but not with 30S subunits that are part of 70S ribosomes or polysomes). Required for efficient processing of 16S rRNA. May interact with the 5'-terminal helix region of 16S rRNA. This chain is Ribosome-binding factor A, found in Shewanella loihica (strain ATCC BAA-1088 / PV-4).